We begin with the raw amino-acid sequence, 704 residues long: Polyribonucleotide nucleotidyltransferase (704 aa).

Mg(2+) contacts are provided by aspartate 486 and aspartate 492. The KH domain maps to 553–612; that stretch reads PKIVIVKINPDKIRDVIGPGGKQINKIIEETGVKIDTEQDGTIYISSANEEMNARAKQII. The 69-residue stretch at 622–690 folds into the S1 motif domain; sequence GEYYLSTVKR…KQGRVNLSRK (69 aa).

This sequence belongs to the polyribonucleotide nucleotidyltransferase family. Mg(2+) serves as cofactor.

It localises to the cytoplasm. It catalyses the reaction RNA(n+1) + phosphate = RNA(n) + a ribonucleoside 5'-diphosphate. Functionally, involved in mRNA degradation. Catalyzes the phosphorolysis of single-stranded polyribonucleotides processively in the 3'- to 5'-direction. In Lysinibacillus sphaericus (strain C3-41), this protein is Polyribonucleotide nucleotidyltransferase.